The chain runs to 288 residues: Type II restriction enzyme DpnII (288 aa).

Belongs to the DpnII type II restriction endonuclease family. In terms of assembly, homodimer.

It carries out the reaction Endonucleolytic cleavage of DNA to give specific double-stranded fragments with terminal 5'-phosphates.. A P subtype restriction enzyme that recognizes the double-stranded unmethylated sequence 5'-GATC-3' and cleaves before G-1. This chain is Type II restriction enzyme DpnII, found in Streptococcus pneumoniae.